Consider the following 159-residue polypeptide: uncharacterized protein (159 aa).

Belongs to the SufE family.

This is an uncharacterized protein from Synechocystis sp. (strain ATCC 27184 / PCC 6803 / Kazusa).